The following is a 214-amino-acid chain: Pyridoxine/pyridoxamine 5'-phosphate oxidase (214 aa).

Substrate-binding positions include 8-11 (RINY) and K66. Residues 61–66 (RIVLIK), 76–77 (FT), R82, K83, and Q105 contribute to the FMN site. Substrate contacts are provided by Y123, R127, and S131. Residues 140–141 (QS) and W184 each bind FMN. 190-192 (RLH) contributes to the substrate binding site. R194 contacts FMN.

This sequence belongs to the pyridoxamine 5'-phosphate oxidase family. In terms of assembly, homodimer. The cofactor is FMN.

The catalysed reaction is pyridoxamine 5'-phosphate + O2 + H2O = pyridoxal 5'-phosphate + H2O2 + NH4(+). It carries out the reaction pyridoxine 5'-phosphate + O2 = pyridoxal 5'-phosphate + H2O2. It participates in cofactor metabolism; pyridoxal 5'-phosphate salvage; pyridoxal 5'-phosphate from pyridoxamine 5'-phosphate: step 1/1. Its pathway is cofactor metabolism; pyridoxal 5'-phosphate salvage; pyridoxal 5'-phosphate from pyridoxine 5'-phosphate: step 1/1. In terms of biological role, catalyzes the oxidation of either pyridoxine 5'-phosphate (PNP) or pyridoxamine 5'-phosphate (PMP) into pyridoxal 5'-phosphate (PLP). The sequence is that of Pyridoxine/pyridoxamine 5'-phosphate oxidase from Burkholderia cenocepacia (strain HI2424).